The following is a 387-amino-acid chain: Formate-dependent phosphoribosylglycinamide formyltransferase (387 aa).

N(1)-(5-phospho-beta-D-ribosyl)glycinamide-binding positions include 15 to 16 (EL) and Glu75. ATP-binding positions include Arg106, Lys147, 152 to 157 (SSGKGQ), 187 to 190 (EEFI), and Glu195. The ATP-grasp domain maps to 111-301 (DLASNELNIR…EFELHLRAVL (191 aa)). 2 residues coordinate Mg(2+): Glu260 and Glu272. Residues Asp279, Lys349, and 356-357 (RR) contribute to the N(1)-(5-phospho-beta-D-ribosyl)glycinamide site.

The protein belongs to the PurK/PurT family. In terms of assembly, homodimer.

The enzyme catalyses N(1)-(5-phospho-beta-D-ribosyl)glycinamide + formate + ATP = N(2)-formyl-N(1)-(5-phospho-beta-D-ribosyl)glycinamide + ADP + phosphate + H(+). The protein operates within purine metabolism; IMP biosynthesis via de novo pathway; N(2)-formyl-N(1)-(5-phospho-D-ribosyl)glycinamide from N(1)-(5-phospho-D-ribosyl)glycinamide (formate route): step 1/1. Involved in the de novo purine biosynthesis. Catalyzes the transfer of formate to 5-phospho-ribosyl-glycinamide (GAR), producing 5-phospho-ribosyl-N-formylglycinamide (FGAR). Formate is provided by PurU via hydrolysis of 10-formyl-tetrahydrofolate. The polypeptide is Formate-dependent phosphoribosylglycinamide formyltransferase (Prochlorococcus marinus (strain NATL2A)).